Here is a 379-residue protein sequence, read N- to C-terminus: UPF0754 membrane protein ABC1518 (379 aa).

2 consecutive transmembrane segments (helical) span residues 1–21 (MHWI…GAAT) and 358–378 (LLGG…VHFF).

It belongs to the UPF0754 family.

The protein resides in the cell membrane. The polypeptide is UPF0754 membrane protein ABC1518 (Shouchella clausii (strain KSM-K16) (Alkalihalobacillus clausii)).